Consider the following 163-residue polypeptide: Nucleotide-binding protein NT01EI_1072 (163 aa).

Belongs to the YajQ family.

Its function is as follows. Nucleotide-binding protein. The sequence is that of Nucleotide-binding protein NT01EI_1072 from Edwardsiella ictaluri (strain 93-146).